The following is an 894-amino-acid chain: Disease resistance protein SUMM2 (894 aa).

The stretch at 31-71 forms a coiled coil; the sequence is ELSKNVVAMKKDMEVLKKKRDDVKRRVDIEEFTRRRERLSQ. The NB-ARC domain maps to 140 to 443; the sequence is TLATPIARIE…CEGFIDENES (304 aa). 183–190 contributes to the ATP binding site; that stretch reads GMGGVGKT. LRR repeat units lie at residues 517 to 538, 539 to 561, 564 to 586, 588 to 610, 611 to 633, 634 to 656, and 660 to 681; these read SVRR…PECL, ELTT…FFRC, MLVV…ISKL, SLRY…QELK, KLRY…SNIS, SLRK…EELQ, and HLEV…LNAP.

It belongs to the disease resistance NB-LRR family. Interacts with PAT1.

Its activity is regulated as follows. Negatively regulated by the MEKK1-MKK1-MKK2-MPK4 kinase cascade. Functionally, disease resistance protein that mediates defense responses against the bacterial pathogen Pseudomonas syringae pv tomato strain DC3000, and the virulent oomycete Hyaloperonospora arabidopsidis isolate Noco2. Becomes active when the MEKK1-MKK1-MKK2-MPK4 kinase cascade is disrupted by the microbial effector hopAI1. Does not seem to be required for the activation of MPK4 by flg22, or flg22-induced up-regulation of PAD3. Functions downstream of MEKK2/SUMM1 in immune responses, including cell death and defense responses. In Arabidopsis thaliana (Mouse-ear cress), this protein is Disease resistance protein SUMM2.